Consider the following 421-residue polypeptide: Aspartokinase (421 aa).

7-10 (KYGG) contributes to the ATP binding site. 25–30 (RIVATK) is a substrate binding site. S41 contributes to the ATP binding site. Substrate contacts are provided by residues 45–49 (DTTDE), E74, 125–126 (LD), 151–154 (RGGS), and S154. ATP-binding positions include 174–175 (SD), 180–185 (YTADPR), and K210. 2 consecutive ACT domains span residues 267–343 (VTVL…YDDQ) and 349–421 (LVGA…GTGR). Substrate-binding positions include D274, 274–279 (DKPGEA), 292–294 (NID), Q298, 360–361 (VT), 374–375 (NV), and 381–382 (SE).

Belongs to the aspartokinase family. In terms of assembly, tetramer consisting of 2 isoforms Alpha (catalytic and regulation) and of a homodimer of 2 isoforms Beta (regulation).

It catalyses the reaction L-aspartate + ATP = 4-phospho-L-aspartate + ADP. It functions in the pathway amino-acid biosynthesis; L-lysine biosynthesis via DAP pathway; (S)-tetrahydrodipicolinate from L-aspartate: step 1/4. It participates in amino-acid biosynthesis; L-methionine biosynthesis via de novo pathway; L-homoserine from L-aspartate: step 1/3. The protein operates within amino-acid biosynthesis; L-threonine biosynthesis; L-threonine from L-aspartate: step 1/5. Catalyzes the phosphorylation of the beta-carboxyl group of aspartic acid with ATP to yield 4-phospho-L-aspartate, which is involved in the branched biosynthetic pathway leading to the biosynthesis of amino acids lysine, threonine, isoleucine and methionine. In Corynebacterium efficiens (strain DSM 44549 / YS-314 / AJ 12310 / JCM 11189 / NBRC 100395), this protein is Aspartokinase (lysC).